A 436-amino-acid polypeptide reads, in one-letter code: Ribosomal protein uS12 methylthiotransferase RimO (436 aa).

The region spanning 2 to 117 is the MTTase N-terminal domain; the sequence is KNVGIISLGC…IAEVIEKIEK (116 aa). The [4Fe-4S] cluster site is built by C11, C47, C80, C154, C158, and C161. The Radical SAM core domain maps to 140-369; it reads TTPNYYAYLK…MEIQKEISYQ (230 aa). The region spanning 372 to 436 is the TRAM domain; sequence LSKVGKQLEV…AYEYDLVGEY (65 aa).

This sequence belongs to the methylthiotransferase family. RimO subfamily. It depends on [4Fe-4S] cluster as a cofactor.

Its subcellular location is the cytoplasm. It catalyses the reaction L-aspartate(89)-[ribosomal protein uS12]-hydrogen + (sulfur carrier)-SH + AH2 + 2 S-adenosyl-L-methionine = 3-methylsulfanyl-L-aspartate(89)-[ribosomal protein uS12]-hydrogen + (sulfur carrier)-H + 5'-deoxyadenosine + L-methionine + A + S-adenosyl-L-homocysteine + 2 H(+). In terms of biological role, catalyzes the methylthiolation of an aspartic acid residue of ribosomal protein uS12. The sequence is that of Ribosomal protein uS12 methylthiotransferase RimO from Thermoanaerobacter sp. (strain X514).